The sequence spans 1213 residues: Protein jagged-1b (1213 aa).

The first 26 residues, 1 to 26, serve as a signal peptide directing secretion; sequence MILRRSSVFSAFYLHAFLLCLRTTVS. Residues 27 to 1064 lie on the Extracellular side of the membrane; the sequence is DASGHFELEI…HQIPSPKTDY (1038 aa). Asparagine 139 is a glycosylation site (N-linked (GlcNAc...) asparagine). The DSL domain occupies 182–226; sequence VTCLEHYYGFGCNKFCRPRDEFFGHYTCDQNGNKTCLEGWTGPDC. Disulfide bonds link cysteine 184-cysteine 193 and cysteine 197-cysteine 209. An N-linked (GlcNAc...) asparagine glycan is attached at asparagine 214. 39 disulfides stabilise this stretch: cysteine 217–cysteine 226, cysteine 231–cysteine 242, cysteine 235–cysteine 248, cysteine 250–cysteine 259, cysteine 262–cysteine 273, cysteine 268–cysteine 279, cysteine 281–cysteine 290, cysteine 297–cysteine 309, cysteine 303–cysteine 319, cysteine 321–cysteine 330, cysteine 337–cysteine 348, cysteine 342–cysteine 357, cysteine 359–cysteine 368, cysteine 375–cysteine 386, cysteine 380–cysteine 395, cysteine 397–cysteine 406, cysteine 413–cysteine 424, cysteine 418–cysteine 433, cysteine 435–cysteine 444, cysteine 451–cysteine 461, cysteine 455–cysteine 470, cysteine 472–cysteine 481, cysteine 488–cysteine 499, cysteine 493–cysteine 508, cysteine 510–cysteine 519, cysteine 526–cysteine 537, cysteine 531–cysteine 546, cysteine 548–cysteine 557, cysteine 596–cysteine 612, cysteine 614–cysteine 623, cysteine 630–cysteine 641, cysteine 635–cysteine 650, cysteine 652–cysteine 661, cysteine 668–cysteine 679, cysteine 673–cysteine 688, cysteine 690–cysteine 699, cysteine 706–cysteine 717, cysteine 711–cysteine 726, and cysteine 728–cysteine 737. One can recognise an EGF-like 1 domain in the interval 227-260; the sequence is NTAICRQGCSTEHGSCKQPGGCKCLYGWQGPYCD. The EGF-like 2; atypical domain occupies 261 to 291; that stretch reads KCIPHPGCVHGTCVEPWQCLCDTNWGGQLCD. EGF-like domains follow at residues 293-331 and 333-369; these read DLNY…VNCE and AEHA…TSCE. The EGF-like 5; calcium-binding domain maps to 371–407; sequence NVDDCTPNQCKHGGTCQDLVNGFKCACPPHWTGKTCQ. An EGF-like 6; calcium-binding domain is found at 409–445; it reads DANECEDKPCVNAKSCHNLIGAYFCECLPGWSGQNCD. An EGF-like 7; calcium-binding domain is found at 447–482; it reads NINDCKGQCLNGGTCKDLVNGYRCLCPPGYTGEQCE. The EGF-like 8; calcium-binding domain occupies 484–520; that stretch reads DVDECASSPCLNGGRCQDEVNGFQCLCPAGFSGQLCQ. EGF-like domains follow at residues 522 to 558 and 592 to 624; these read DIDY…KNCS and SSNV…TYCH. Asparagine 556 carries N-linked (GlcNAc...) asparagine glycosylation. The 37-residue stretch at 626–662 folds into the EGF-like 11; calcium-binding domain; sequence NINDCESNPCRNGGTCIDKVNVYQCICADGWEGVHCE. The 37-residue stretch at 664–700 folds into the EGF-like 12; calcium-binding domain; that stretch reads NIDDCSLNPCLNKGACQDLVNDFYCECRNGWKGKTCH. The EGF-like 13 domain occupies 702 to 738; that stretch reads RDSQCDEATCNNGGTCHDEGDTFKCRCSPGWEGATCN. A glycan (N-linked (GlcNAc...) asparagine) is linked at asparagine 742. Cystine bridges form between cysteine 745-cysteine 756, cysteine 750-cysteine 765, cysteine 767-cysteine 776, cysteine 783-cysteine 794, cysteine 788-cysteine 803, cysteine 805-cysteine 814, cysteine 821-cysteine 832, cysteine 826-cysteine 841, and cysteine 843-cysteine 852. An EGF-like 14 domain is found at 746–777; the sequence is LPNPCENGGTCVVNGDSFNCVCKEGWEGSTCT. The 37-residue stretch at 779 to 815 folds into the EGF-like 15; calcium-binding domain; it reads NTNDCNPHPCYNSGTCVDGENWYRCECAPGFAGPDCR. Residues 817-853 form the EGF-like 16; calcium-binding domain; the sequence is NINECQSSPCAFGSTCVDEINGYRCLCPPGRIGPDCQ. Positions 860–914 constitute a VWFC domain; the sequence is CIANGQVTADGAKWEEDCNICQCQNGRIHCTMMWCGPKSCRIGKARGGCPASQSC. An EGF-like 17 domain is found at 918–956; the sequence is KEEQCFVKPCPSLGECWPSAPPPPSKCHASFSYQDDSCA. Residues asparagine 957, asparagine 988, and asparagine 1042 are each glycosylated (N-linked (GlcNAc...) asparagine). A helical transmembrane segment spans residues 1065-1087; sequence LVPLLSSIFIVLWIFALASAFLW. Residues 1088–1213 lie on the Cytoplasmic side of the membrane; sequence CIHRRRKQNT…QSLNRMEYIV (126 aa). Residues 1181-1202 form a disordered region; sequence EERAPNKNPNWTNKQDNRDLET.

Its subcellular location is the membrane. The protein localises to the cell membrane. In terms of biological role, ligand for Notch receptors and involved in the mediation of Notch signaling. Seems to be involved in cell-fate decisions. This Danio rerio (Zebrafish) protein is Protein jagged-1b (jag1b).